The following is a 333-amino-acid chain: Ig gamma-2B chain C region (333 aa).

Ig-like domains lie at 6-96 (PSVY…KKVE), 124-223 (PSVF…KTIS), and 232-328 (PQVY…KSIS). Cystine bridges form between Cys27–Cys80, Cys147–Cys207, and Cys253–Cys311.

This is Ig gamma-2B chain C region (Igh-1a) from Rattus norvegicus (Rat).